A 183-amino-acid polypeptide reads, in one-letter code: Alkyl hydroperoxide reductase AhpD (183 aa).

Residue Cys-132 is the Proton donor of the active site. Cys-132 and Cys-135 are joined by a disulfide. Residue Cys-135 is the Cysteine sulfenic acid (-SOH) intermediate of the active site.

This sequence belongs to the AhpD family.

The enzyme catalyses N(6)-[(R)-dihydrolipoyl]-L-lysyl-[lipoyl-carrier protein] + a hydroperoxide = N(6)-[(R)-lipoyl]-L-lysyl-[lipoyl-carrier protein] + an alcohol + H2O. Its function is as follows. Antioxidant protein with alkyl hydroperoxidase activity. Required for the reduction of the AhpC active site cysteine residues and for the regeneration of the AhpC enzyme activity. The polypeptide is Alkyl hydroperoxide reductase AhpD (Acidobacterium capsulatum (strain ATCC 51196 / DSM 11244 / BCRC 80197 / JCM 7670 / NBRC 15755 / NCIMB 13165 / 161)).